The sequence spans 536 residues: Cytochrome c oxidase subunit 1 (536 aa).

A helical transmembrane segment spans residues 19–39 (IGMTYLGFGMLSAMMGTGMSV). E44 provides a ligand contact to Ca(2+). H67 provides a ligand contact to Fe(II)-heme a. The next 6 membrane-spanning stretches (helical) occupy residues 69–89 (LLMMFFFIMPVWMGAFGNFFL), 103–123 (LNNISFWCLPPALVCMVCSVL), 152–172 (AMFAMHLTSMSSLLGAMNFMV), 188–208 (PLFAWAMFLTAMLLLLSLPVL), 240–260 (LFWFFGHPEVYILMMPGFGVM), and 273–293 (FGEMGMLYAMGSIGFLGFLVW). H246 lines the Cu cation pocket. The segment at residues 246 to 250 (HPEVY) is a cross-link (1'-histidyl-3'-tyrosine (His-Tyr)). Y250 serves as a coordination point for O2. Positions 295 and 296 each coordinate Cu cation. The next 2 membrane-spanning stretches (helical) occupy residues 315-335 (MVIAVPTGIKIFSWLATIYGG) and 341-361 (VPMLFALGFLFLFTMGGLTGV). Mg(2+) is bound by residues H373 and D374. Residue H381 coordinates heme a3. H383 lines the Fe(II)-heme a pocket. 2 helical membrane-spanning segments follow: residues 388–408 (MGALFSLMGAYYYWGPAMFGL) and 418–438 (HFWLLFMSVNVMFLPMHFLGL). P446 lines the Ca(2+) pocket. The chain crosses the membrane as a helical span at residues 461-481 (MGSAMSVMSVLVGLKSVLVQL).

The protein belongs to the heme-copper respiratory oxidase family. In terms of assembly, component of the cytochrome c oxidase (complex IV, CIV), a multisubunit enzyme composed of a catalytic core of 3 subunits and several supernumerary subunits. The complex exists as a monomer or a dimer and forms supercomplexes (SCs) in the inner mitochondrial membrane with ubiquinol-cytochrome c oxidoreductase (cytochrome b-c1 complex, complex III, CIII). Heme serves as cofactor. It depends on Cu cation as a cofactor.

It localises to the mitochondrion inner membrane. It carries out the reaction 4 Fe(II)-[cytochrome c] + O2 + 8 H(+)(in) = 4 Fe(III)-[cytochrome c] + 2 H2O + 4 H(+)(out). The protein operates within energy metabolism; oxidative phosphorylation. Functionally, component of the cytochrome c oxidase, the last enzyme in the mitochondrial electron transport chain which drives oxidative phosphorylation. The respiratory chain contains 3 multisubunit complexes succinate dehydrogenase (complex II, CII), ubiquinol-cytochrome c oxidoreductase (cytochrome b-c1 complex, complex III, CIII) and cytochrome c oxidase (complex IV, CIV), that cooperate to transfer electrons derived from NADH and succinate to molecular oxygen, creating an electrochemical gradient over the inner membrane that drives transmembrane transport and the ATP synthase. Cytochrome c oxidase is the component of the respiratory chain that catalyzes the reduction of oxygen to water. Electrons originating from reduced cytochrome c in the intermembrane space (IMS) are transferred via the dinuclear copper A center (CU(A)) of subunit 2 and heme A of subunit 1 to the active site in subunit 1, a binuclear center (BNC) formed by heme A3 and copper B (CU(B)). The BNC reduces molecular oxygen to 2 water molecules using 4 electrons from cytochrome c in the IMS and 4 protons from the mitochondrial matrix. In Debaryomyces hansenii (strain ATCC 36239 / CBS 767 / BCRC 21394 / JCM 1990 / NBRC 0083 / IGC 2968) (Yeast), this protein is Cytochrome c oxidase subunit 1 (COX1).